The sequence spans 185 residues: MDPPTAGAQSLGAAEQPRGLQLPSGREAPPSPGTAFAPADHSSQEKATENATDRLANGAQSIPHDSPAHGEGTHCEEEGFAEDDEDSDGEPSPWELSEGMSGCLPKEQAGDLFHEDWDLELKADQGNPYDADDIQGCLSQEVRPWVCCAPQGDMIYDPSWHHPPPLIPHYSKMVFETGQFDDAED.

Met1 is subject to N-acetylmethionine. The disordered stretch occupies residues 1 to 109 (MDPPTAGAQS…MSGCLPKEQA (109 aa)). Basic and acidic residues-rich tracts occupy residues 42-52 (SSQEKATENAT) and 66-77 (SPAHGEGTHCEE). Phosphoserine is present on Ser66. Residues 78–89 (EGFAEDDEDSDG) are compositionally biased toward acidic residues.

Interacts with PRMT5. Interacts with histone H4; specifically interacts with the N-terminus of histone H4 but not with histone H3. Interacts with CBFB. Found in a complex with PRMT5, RUNX1 and CBFB.

It localises to the nucleus. Functionally, histone-binding protein required for histone H4 methyltransferase activity of PRMT5. Specifically required for histone H4 'Arg-3' methylation mediated by PRMT5, but not histone H3 'Arg-8' methylation, suggesting that it modulates the substrate specificity of PRMT5. Specifically interacts with the N-terminus of histone H4 but not with histone H3, suggesting that it acts by promoting the association between histone H4 and PRMT5. Involved in CCNE1 promoter repression. Plays a role in muscle cell differentiation by modulating the recruitment of PRMT5 to the promoter of genes involved in the coordination between cell cycle exit and muscle differentiation. The protein is Coordinator of PRMT5 and differentiation stimulator (COPRS) of Bos taurus (Bovine).